A 1032-amino-acid chain; its full sequence is Putative oxidoreductase YgfK (1032 aa).

In terms of domain architecture, 4Fe-4S ferredoxin-type spans R928–K958. Positions 938, 941, 944, and 948 each coordinate [4Fe-4S] cluster.

[4Fe-4S] cluster is required as a cofactor.

Functionally, could be an iron-sulfur flavoprotein with NADPH:O(2) oxidoreductase activity. The chain is Putative oxidoreductase YgfK (ygfK) from Escherichia coli O157:H7.